Consider the following 609-residue polypeptide: Probable ubiquitin-conjugating enzyme E2 25 (609 aa).

Disordered regions lie at residues 70–99 (EEDEYAVGSPGDDYGYPESSPLSNSLLDPE) and 151–185 (ADKESASSSKSSHANNGNNSSKKATKASGIHSQFS). Residues 156–178 (ASSSKSSHANNGNNSSKKATKAS) are compositionally biased toward low complexity. The UBC core domain maps to 332-492 (DWAKRIQDEW…TFILSLKTMV (161 aa)). The active-site Glycyl thioester intermediate is the C418.

This sequence belongs to the ubiquitin-conjugating enzyme family. Expressed in seeds, pistils, siliques, hypocotyls and leaves.

The catalysed reaction is S-ubiquitinyl-[E1 ubiquitin-activating enzyme]-L-cysteine + [E2 ubiquitin-conjugating enzyme]-L-cysteine = [E1 ubiquitin-activating enzyme]-L-cysteine + S-ubiquitinyl-[E2 ubiquitin-conjugating enzyme]-L-cysteine.. The protein operates within protein modification; protein ubiquitination. Its function is as follows. Accepts the ubiquitin from the E1 complex and catalyzes its covalent attachment to other proteins. The polypeptide is Probable ubiquitin-conjugating enzyme E2 25 (UBC25) (Arabidopsis thaliana (Mouse-ear cress)).